The chain runs to 635 residues: Endo-1,4-beta-xylanase B (635 aa).

A GH10 domain is found at 1–337; that stretch reads MNLKTAYEPY…KEAYYAVLKA (337 aa). The active-site Proton donor is glutamate 150. Catalysis depends on glutamate 255, which acts as the Nucleophile.

It belongs to the glycosyl hydrolase 10 (cellulase F) family.

It carries out the reaction Endohydrolysis of (1-&gt;4)-beta-D-xylosidic linkages in xylans.. The protein operates within glycan degradation; xylan degradation. Functionally, b.fibrisolvens is located in the rumen of ruminant animals, where it contributes to the animal's digestion of plant material by hydrolyzing hemicellulose with its xylanases. The sequence is that of Endo-1,4-beta-xylanase B (xynB) from Butyrivibrio fibrisolvens.